A 261-amino-acid polypeptide reads, in one-letter code: Protein STAY-GREEN, chloroplastic (261 aa).

Residues 1-54 (MDTLTSAPLLTTKFKPSFSPQQKPCFPHRRRFENGKKNQSIVPVARLFGPAIFE) constitute a chloroplast transit peptide.

It belongs to the staygreen family.

It is found in the plastid. It localises to the chloroplast. In terms of biological role, probably involved in the disassembling mechanism of the intact light-harvesting complex of photosystem II (LHCII) in the thylakoid membranes. Required for the chlorophyll breakdown pathway. Acts independent and upstream of pheophorbide a oxygenase (PAO). This chain is Protein STAY-GREEN, chloroplastic (SGR), found in Pisum sativum (Garden pea).